Reading from the N-terminus, the 238-residue chain is MTHLILVRHGQSEWNLEKRFTGWVDVDLTGQGKLEACKAGEYIKETKIDIDYFYSSFQLRAINTLKFIQDTLRDKREPVKAWQLNERHYGALTGLNKDEMKEKLGEDKIHAFRRSWDIKPDPLNRNNPYHPLNIEVYKSIPKENIPDTESLKDTYDRVMKFYIDEIQMKLKNDKNILISAHGNSIRALCKFLFKLDNQRITLLEIPTGNPLLINLDSKQNIKECTYLDQDRAKDLLVF.

Substrate-binding positions include 8–15, 21–22, Arg-60, 86–89, Lys-97, 113–114, and 182–183; these read RHGQSEWN, TG, ERHY, RR, and GN. The active-site Tele-phosphohistidine intermediate is His-9. The Proton donor/acceptor role is filled by Glu-86.

The protein belongs to the phosphoglycerate mutase family. BPG-dependent PGAM subfamily. Homodimer.

It catalyses the reaction (2R)-2-phosphoglycerate = (2R)-3-phosphoglycerate. Its pathway is carbohydrate degradation; glycolysis; pyruvate from D-glyceraldehyde 3-phosphate: step 3/5. Its function is as follows. Catalyzes the interconversion of 2-phosphoglycerate and 3-phosphoglycerate. This is 2,3-bisphosphoglycerate-dependent phosphoglycerate mutase from Pelagibacter ubique (strain HTCC1062).